Reading from the N-terminus, the 134-residue chain is uncharacterized protein (134 aa).

Positions 1–30 (MGTLQGAALRSRERPSWPQETHGHRERTEE) are disordered. The segment covering 10–30 (RSRERPSWPQETHGHRERTEE) has biased composition (basic and acidic residues).

This is an uncharacterized protein from Homo sapiens (Human).